The chain runs to 380 residues: Succinyl-diaminopimelate desuccinylase (380 aa).

Residue His71 participates in Zn(2+) binding. Asp73 is a catalytic residue. Position 104 (Asp104) interacts with Zn(2+). Glu138 (proton acceptor) is an active-site residue. Residues Glu139, Glu167, and His353 each coordinate Zn(2+).

The protein belongs to the peptidase M20A family. DapE subfamily. As to quaternary structure, homodimer. The cofactor is Zn(2+). It depends on Co(2+) as a cofactor.

It carries out the reaction N-succinyl-(2S,6S)-2,6-diaminopimelate + H2O = (2S,6S)-2,6-diaminopimelate + succinate. It functions in the pathway amino-acid biosynthesis; L-lysine biosynthesis via DAP pathway; LL-2,6-diaminopimelate from (S)-tetrahydrodipicolinate (succinylase route): step 3/3. Its function is as follows. Catalyzes the hydrolysis of N-succinyl-L,L-diaminopimelic acid (SDAP), forming succinate and LL-2,6-diaminopimelate (DAP), an intermediate involved in the bacterial biosynthesis of lysine and meso-diaminopimelic acid, an essential component of bacterial cell walls. The chain is Succinyl-diaminopimelate desuccinylase from Shewanella baltica (strain OS185).